The sequence spans 173 residues: Large ribosomal subunit protein uL16 (173 aa).

The protein belongs to the universal ribosomal protein uL16 family.

The chain is Large ribosomal subunit protein uL16 from Methanococcus maripaludis (strain C5 / ATCC BAA-1333).